The following is a 105-amino-acid chain: Large ribosomal subunit protein bL21 (105 aa).

This sequence belongs to the bacterial ribosomal protein bL21 family. Part of the 50S ribosomal subunit. Contacts protein L20.

In terms of biological role, this protein binds to 23S rRNA in the presence of protein L20. The sequence is that of Large ribosomal subunit protein bL21 from Treponema pallidum (strain Nichols).